A 475-amino-acid polypeptide reads, in one-letter code: Putative F-box protein At3g58960 (475 aa).

The 49-residue stretch at 1–49 folds into the F-box domain; sequence MDRISSLSNDIISNIVSFLSAKDAAVASVLSKRWQNIYTIVPNLEFDNT.

The polypeptide is Putative F-box protein At3g58960 (Arabidopsis thaliana (Mouse-ear cress)).